The sequence spans 295 residues: Protoheme IX farnesyltransferase 2 (295 aa).

9 helical membrane passes run 9 to 29, 36 to 56, 83 to 103, 108 to 128, 135 to 155, 163 to 183, 209 to 229, 230 to 250, and 264 to 284; these read ITKPGIIFGNVLSVAGGFFLA, FALFLAVVIGTSLVVASGCVF, LPLALIYATLLGVAGFSLLYV, LSAFCALIGFVVYVGFYSLWL, GTLVGSLSGAMPPVIGYCAVS, VTLLVMFSLWQMPHSFAIAIF, IVLYVLAFVLATLMLTLGGYA, GLGYLAVAAAMGLYWLYMAWG, and VFGFSILTVTALSVMMGVDSQ.

It belongs to the UbiA prenyltransferase family. Protoheme IX farnesyltransferase subfamily.

It localises to the cell inner membrane. It carries out the reaction heme b + (2E,6E)-farnesyl diphosphate + H2O = Fe(II)-heme o + diphosphate. It functions in the pathway porphyrin-containing compound metabolism; heme O biosynthesis; heme O from protoheme: step 1/1. Converts heme B (protoheme IX) to heme O by substitution of the vinyl group on carbon 2 of heme B porphyrin ring with a hydroxyethyl farnesyl side group. The protein is Protoheme IX farnesyltransferase 2 of Pseudomonas putida (strain ATCC 47054 / DSM 6125 / CFBP 8728 / NCIMB 11950 / KT2440).